Here is a 108-residue protein sequence, read N- to C-terminus: Nucleoid-associated protein GK0018 (108 aa).

The tract at residues 1 to 32 is disordered; that stretch reads MMRGGMGNMQKMLKQMQKMQKEMQKAQEELAE. A compositionally biased stretch (low complexity) spans 9–18; sequence MQKMLKQMQK. Positions 19-32 are enriched in basic and acidic residues; that stretch reads MQKEMQKAQEELAE.

This sequence belongs to the YbaB/EbfC family. Homodimer.

It localises to the cytoplasm. Its subcellular location is the nucleoid. In terms of biological role, binds to DNA and alters its conformation. May be involved in regulation of gene expression, nucleoid organization and DNA protection. The chain is Nucleoid-associated protein GK0018 from Geobacillus kaustophilus (strain HTA426).